Reading from the N-terminus, the 228-residue chain is Cytidylate kinase (228 aa).

12–20 (GPSGSGKGT) is a binding site for ATP.

It belongs to the cytidylate kinase family. Type 1 subfamily.

Its subcellular location is the cytoplasm. It carries out the reaction CMP + ATP = CDP + ADP. The catalysed reaction is dCMP + ATP = dCDP + ADP. The chain is Cytidylate kinase from Pseudomonas putida (strain ATCC 47054 / DSM 6125 / CFBP 8728 / NCIMB 11950 / KT2440).